Consider the following 185-residue polypeptide: Ribosome-recycling factor (185 aa).

Belongs to the RRF family.

It localises to the cytoplasm. Responsible for the release of ribosomes from messenger RNA at the termination of protein biosynthesis. May increase the efficiency of translation by recycling ribosomes from one round of translation to another. The sequence is that of Ribosome-recycling factor from Chloroflexus aurantiacus (strain ATCC 29364 / DSM 637 / Y-400-fl).